A 545-amino-acid polypeptide reads, in one-letter code: CTP synthase (545 aa).

An amidoligase domain region spans residues 1–266; it reads MTTNYIFVTG…DDYICKRFSL (266 aa). Ser14 serves as a coordination point for CTP. Position 14 (Ser14) interacts with UTP. Residues 15–20 and Asp72 contribute to the ATP site; that span reads SLGKGI. Mg(2+)-binding residues include Asp72 and Glu140. CTP contacts are provided by residues 147 to 149, 187 to 192, and Lys223; these read DIE and KTKPTQ. UTP-binding positions include 187–192 and Lys223; that span reads KTKPTQ. Residue 239 to 241 participates in ATP binding; sequence KDV. One can recognise a Glutamine amidotransferase type-1 domain in the interval 291–542; it reads NIGMVGKYVE…VKAASEYQKR (252 aa). Gly352 provides a ligand contact to L-glutamine. The active-site Nucleophile; for glutamine hydrolysis is the Cys379. Residues 380 to 383, Glu403, and Arg470 contribute to the L-glutamine site; that span reads LGMQ. Active-site residues include His515 and Glu517.

It belongs to the CTP synthase family. Homotetramer.

The enzyme catalyses UTP + L-glutamine + ATP + H2O = CTP + L-glutamate + ADP + phosphate + 2 H(+). It carries out the reaction L-glutamine + H2O = L-glutamate + NH4(+). The catalysed reaction is UTP + NH4(+) + ATP = CTP + ADP + phosphate + 2 H(+). Its pathway is pyrimidine metabolism; CTP biosynthesis via de novo pathway; CTP from UDP: step 2/2. With respect to regulation, allosterically activated by GTP, when glutamine is the substrate; GTP has no effect on the reaction when ammonia is the substrate. The allosteric effector GTP functions by stabilizing the protein conformation that binds the tetrahedral intermediate(s) formed during glutamine hydrolysis. Inhibited by the product CTP, via allosteric rather than competitive inhibition. In terms of biological role, catalyzes the ATP-dependent amination of UTP to CTP with either L-glutamine or ammonia as the source of nitrogen. Regulates intracellular CTP levels through interactions with the four ribonucleotide triphosphates. The sequence is that of CTP synthase from Erwinia tasmaniensis (strain DSM 17950 / CFBP 7177 / CIP 109463 / NCPPB 4357 / Et1/99).